Reading from the N-terminus, the 70-residue chain is DNA-directed RNA polymerases I, II, and III subunit rpabc5 (70 aa).

Residues Cys-7, Cys-10, Cys-44, and Cys-45 each contribute to the Zn(2+) site.

It belongs to the archaeal Rpo10/eukaryotic RPB10 RNA polymerase subunit family. In terms of assembly, component of the RNA polymerase I (Pol I), RNA polymerase II (Pol II) and RNA polymerase III (Pol III) complexes.

Its subcellular location is the nucleus. Its function is as follows. DNA-dependent RNA polymerase catalyzes the transcription of DNA into RNA using the four ribonucleoside triphosphates as substrates. Common component of RNA polymerases I, II and III which synthesize ribosomal RNA precursors, mRNA precursors and many functional non-coding RNAs, and a small RNAs, such as 5S rRNA and tRNAs, respectively. Pol II is the central component of the basal RNA polymerase II transcription machinery. Pols are composed of mobile elements that move relative to each other. In Pol II, RBP10 is part of the core element with the central large cleft. The protein is DNA-directed RNA polymerases I, II, and III subunit rpabc5 (polr2l) of Dictyostelium discoideum (Social amoeba).